The chain runs to 139 residues: Acidic phospholipase A2 5 (139 aa).

A signal peptide spans 1–16 (MRTLWIVAVWLMGVEG). Intrachain disulfides connect cysteine 42-cysteine 131, cysteine 44-cysteine 60, cysteine 59-cysteine 111, cysteine 65-cysteine 139, cysteine 66-cysteine 104, cysteine 73-cysteine 97, and cysteine 91-cysteine 102. The Ca(2+) site is built by tyrosine 43, glycine 45, and glycine 47. Histidine 63 is an active-site residue. Aspartate 64 provides a ligand contact to Ca(2+). The active site involves aspartate 105.

It belongs to the phospholipase A2 family. Group II subfamily. D49 sub-subfamily. Ca(2+) serves as cofactor. As to expression, expressed by the venom gland.

The protein localises to the secreted. The enzyme catalyses a 1,2-diacyl-sn-glycero-3-phosphocholine + H2O = a 1-acyl-sn-glycero-3-phosphocholine + a fatty acid + H(+). In terms of biological role, PLA2 catalyzes the calcium-dependent hydrolysis of the 2-acyl groups in 3-sn-phosphoglycerides. The polypeptide is Acidic phospholipase A2 5 (Echis pyramidum leakeyi (Leakey's carpet viper)).